Consider the following 178-residue polypeptide: MAGALRKTMIYLGLADGDEHYESEHHTPHKDEDDSMEHDREERRAPAPVREIARETPTPHAAEEEYRAPVTPIKRAASSREETTGLRQITTIHPRSYNDAKLIGESFRDGIPVIMNVTDMGEADAKRLVDFSAGLVFGLRGSIERVTNKVFLLSPSYVEVIGDDKKVSETQASFFNQS.

Over residues 19–45 the composition is skewed to basic and acidic residues; sequence EHYESEHHTPHKDEDDSMEHDREERRA. Residues 19 to 65 are disordered; sequence EHYESEHHTPHKDEDDSMEHDREERRAPAPVREIARETPTPHAAEEE.

This sequence belongs to the SepF family. Homodimer. Interacts with FtsZ.

The protein localises to the cytoplasm. Its function is as follows. Cell division protein that is part of the divisome complex and is recruited early to the Z-ring. Probably stimulates Z-ring formation, perhaps through the cross-linking of FtsZ protofilaments. Its function overlaps with FtsA. The chain is Cell division protein SepF from Arthrobacter sp. (strain FB24).